A 260-amino-acid chain; its full sequence is 4-hydroxy-tetrahydrodipicolinate reductase (260 aa).

NAD(+) is bound by residues 12–17 (GFRGKM), 92–94 (GTT), and 118–121 (APNF). Catalysis depends on H148, which acts as the Proton donor/acceptor. H149 lines the (S)-2,3,4,5-tetrahydrodipicolinate pocket. Catalysis depends on K152, which acts as the Proton donor. Position 158–159 (158–159 (GT)) interacts with (S)-2,3,4,5-tetrahydrodipicolinate.

This sequence belongs to the DapB family.

Its subcellular location is the cytoplasm. The catalysed reaction is (S)-2,3,4,5-tetrahydrodipicolinate + NAD(+) + H2O = (2S,4S)-4-hydroxy-2,3,4,5-tetrahydrodipicolinate + NADH + H(+). It carries out the reaction (S)-2,3,4,5-tetrahydrodipicolinate + NADP(+) + H2O = (2S,4S)-4-hydroxy-2,3,4,5-tetrahydrodipicolinate + NADPH + H(+). Its pathway is amino-acid biosynthesis; L-lysine biosynthesis via DAP pathway; (S)-tetrahydrodipicolinate from L-aspartate: step 4/4. Its function is as follows. Catalyzes the conversion of 4-hydroxy-tetrahydrodipicolinate (HTPA) to tetrahydrodipicolinate. The polypeptide is 4-hydroxy-tetrahydrodipicolinate reductase (Lactococcus lactis subsp. cremoris (strain MG1363)).